The chain runs to 566 residues: Cyclin G (566 aa).

Residues 285–368 form the Cyclin N-terminal domain; it reads MWYELPSDVL…VIANKLGVQM (84 aa).

The protein belongs to the cyclin family. Cyclin G subfamily. As to quaternary structure, interacts with corto. Interacts with the cyclin-dependent kinases Cdk2 and Cdk4. Interacts with Brca2 and Rad9. Interacts with polycomb protein Asx. Interacts with protein phosphatase 2A subunit wdb.

The protein localises to the chromosome. Cyclin with roles in multiple processes including transcription, meiotic recombination repair, cell cycle regulation, and promotion of normal growth and metabolism. Binds to the promoter region of the homeobox gene Abd-B and is involved in maintaining Abd-B expression in the pupal epithelium. Involved in the transcriptional repression of the homeotic genes Scr and Ubx. Plays a role in meiotic recombination repair of DNA double-strand breaks which ensures efficient translation of grk and promotes grk activity in the oocyte, leading to oocyte dorso-ventral axis formation following secretion of grk from the oocyte and its binding to Egfr in the directly overlying follicle cells. Negatively regulates the binding of serine/threonine-protein kinase Akt1 to the protein phosphatase 2A subunit wdb, promoting normal growth and metabolism. Required for the formation of bilateral symmetry. Negatively regulates cell cycle progression by preventing G1 to S transition and retarding S-phase progression. The protein is Cyclin G of Drosophila melanogaster (Fruit fly).